We begin with the raw amino-acid sequence, 448 residues long: 5-hydroxytryptamine receptor 7 (448 aa).

The Extracellular portion of the chain corresponds to 1-86 (MMDVNSSGRP…INYGRVEKVV (86 aa)). 2 N-linked (GlcNAc...) asparagine glycosylation sites follow: asparagine 5 and asparagine 69. The helical transmembrane segment at 87-111 (IGSILTLITLLTIAGNCLVVISVCF) threads the bilayer. Residues 112-121 (VKKLRQPSNY) lie on the Cytoplasmic side of the membrane. The chain crosses the membrane as a helical span at residues 122-143 (LIVSLALADLSVAVAVMPFVSV). Residues 144 to 155 (TDLIGGKWIFGH) lie on the Extracellular side of the membrane. Residues 156-181 (FFCNVFIAMDVMCCTASIMTLCVISI) form a helical membrane-spanning segment. A disulfide bridge links cysteine 158 with cysteine 234. Aspartate 165 is a serotonin binding site. Topologically, residues 182–201 (DRYLGITRPLTYPVRQNGKC) are cytoplasmic. Residues 202-222 (MAKMILSVWLLSASITLPPLF) traverse the membrane as a helical segment. At 223 to 240 (GWAQNVNDDKVCLISQDF) the chain is on the extracellular side. The helical transmembrane segment at 241-263 (GYTIYSTAVAFYIPMSVMLFMYY) threads the bilayer. The Cytoplasmic portion of the chain corresponds to 264–329 (QIYKAARKSA…SIFKREQKAA (66 aa)). Residues 330 to 355 (TTLGIIVGAFTVCWLPFFLLSTARPF) form a helical membrane-spanning segment. The Extracellular portion of the chain corresponds to 356 to 366 (ICGTSCSCIPL). A helical transmembrane segment spans residues 367-390 (WVERTCLWLGYANSLINPFIYAFF). Residues 391–448 (NRDLRTTYRSLLQCQYRNINRKLSAAGMHEALKLAERPERSEFVLQNSDHCGKKGHDT) lie on the Cytoplasmic side of the membrane. Cysteine 404 carries S-palmitoyl cysteine lipidation.

This sequence belongs to the G-protein coupled receptor 1 family. Thalamus, hypothalamus, and the hippocampal rudiments.

It localises to the cell membrane. Functionally, G-protein coupled receptor for 5-hydroxytryptamine (serotonin), a biogenic hormone that functions as a neurotransmitter, a hormone and a mitogen. Ligand binding causes a conformation change that triggers signaling via guanine nucleotide-binding proteins (G proteins) and modulates the activity of downstream effectors. HTR7 is coupled to G(s) G alpha proteins and mediates activation of adenylate cyclase activity. This is 5-hydroxytryptamine receptor 7 from Rattus norvegicus (Rat).